The sequence spans 833 residues: Patatin-like phospholipase domain-containing protein SNOG_00918 (833 aa).

Disordered stretches follow at residues 1-20 (MTDV…SAFD) and 49-71 (HLSP…SANN). Residues 108-128 (WPLLVVVLGWLLFLSIAYVFT) form a helical membrane-spanning segment. Residues 301-457 (LCLSGGATFA…RTDIPLKALN (157 aa)) enclose the PNPLA domain. The GXSXG signature appears at 332–336 (GTSGG). The Nucleophile role is filled by Ser334. Asp444 acts as the Proton acceptor in catalysis. Disordered stretches follow at residues 630–657 (TKSK…FSRP) and 680–833 (LRTD…GKGL). The segment covering 644-655 (SGSESSSSADFS) has biased composition (low complexity). A compositionally biased stretch (polar residues) spans 689 to 707 (DTPNSPSLSARLTGWWNTK). Basic and acidic residues-rich tracts occupy residues 740-750 (RPPKEVRDLQA), 759-769 (RNSDFLEEIRR), and 782-794 (DEGR…RGDV). A compositionally biased stretch (acidic residues) spans 809 to 819 (EFGDNEGDGEE).

It belongs to the PLPL family.

The protein resides in the membrane. Its function is as follows. Probable lipid hydrolase. In Phaeosphaeria nodorum (strain SN15 / ATCC MYA-4574 / FGSC 10173) (Glume blotch fungus), this protein is Patatin-like phospholipase domain-containing protein SNOG_00918.